The primary structure comprises 208 residues: GATA transcription factor 29 (208 aa).

The GATA-type; atypical zinc-finger motif lies at 155–208; the sequence is GMKKCTNMNCNALNTPMWRRGPLGPKSLCNACGIKFRKEEERKAKRNVVIVLDD.

It belongs to the type IV zinc-finger family. Class B subfamily.

The protein localises to the nucleus. In terms of biological role, transcriptional regulator that specifically binds 5'-GATA-3' or 5'-GAT-3' motifs within gene promoters. This Arabidopsis thaliana (Mouse-ear cress) protein is GATA transcription factor 29 (GATA29).